Reading from the N-terminus, the 289-residue chain is MCMRRFYICSQGDNLAIKRIGIASRCDRPEVLDMVREILARFSSQVQIFVSTATAEVLGIEGTPVERMRDEGVELVISVGGDGTVLRNIAKMKDPLPILGINMGTLGFLVDVEPEDAIETIEEVLYGFSYLERMRVDVFLNGEMLETATNEIAVMSAKPAKIIQFEVHVNDCLLDEMRADGVVFATPTGSTAYAMSAGGPIINPRVNAIVVVPVAPFKLSSRPWVIPADSEITVKLLEHKKDAVIAIDGQKSYRIRPEDIVKLKKSKFPARFVRISDTCFYERVQRKLS.

The active-site Proton acceptor is the Asp82. NAD(+)-binding positions include 82–83 (DG), Arg87, 150–151 (NE), Lys161, Arg178, Asp180, 191–196 (TAYAMS), Ala215, and Gln250.

Belongs to the NAD kinase family. A divalent metal cation is required as a cofactor.

It is found in the cytoplasm. The catalysed reaction is NAD(+) + ATP = ADP + NADP(+) + H(+). Involved in the regulation of the intracellular balance of NAD and NADP, and is a key enzyme in the biosynthesis of NADP. Catalyzes specifically the phosphorylation on 2'-hydroxyl of the adenosine moiety of NAD to yield NADP. The polypeptide is NAD kinase (Methanosarcina mazei (strain ATCC BAA-159 / DSM 3647 / Goe1 / Go1 / JCM 11833 / OCM 88) (Methanosarcina frisia)).